Here is a 222-residue protein sequence, read N- to C-terminus: Superoxide dismutase [Mn], mitochondrial (222 aa).

The N-terminal 24 residues, 1-24 (MLSRGVCGTSRQLAPALGYLGSRQ), are a transit peptide targeting the mitochondrion. His-50 lines the Mn(2+) pocket. Residue Tyr-58 is modified to 3'-nitrotyrosine. Residues Lys-68 and Lys-75 each carry the N6-acetyllysine; alternate modification. N6-succinyllysine; alternate occurs at positions 68 and 75. His-98 contributes to the Mn(2+) binding site. Lys-114 bears the N6-acetyllysine mark. 2 positions are modified to N6-acetyllysine; alternate: Lys-122 and Lys-130. Lys-122 and Lys-130 each carry N6-succinyllysine; alternate. Asp-183 and His-187 together coordinate Mn(2+). At Lys-202 the chain carries N6-acetyllysine.

The protein belongs to the iron/manganese superoxide dismutase family. Homotetramer. It depends on Mn(2+) as a cofactor. In terms of processing, nitrated under oxidative stress. Nitration coupled with oxidation inhibits the catalytic activity. Acetylation at Lys-122 decreases enzymatic activity. Deacetylated by SIRT3 upon exposure to ionizing radiations or after long fasting. Post-translationally, polyubiquitinated; leading to proteasomal degradation. Deubiquitinated by USP36 which increases protein stability.

Its subcellular location is the mitochondrion matrix. It catalyses the reaction 2 superoxide + 2 H(+) = H2O2 + O2. In terms of biological role, destroys superoxide anion radicals which are normally produced within the cells and which are toxic to biological systems. This is Superoxide dismutase [Mn], mitochondrial (SOD2) from Pongo pygmaeus (Bornean orangutan).